A 945-amino-acid chain; its full sequence is Isoleucine--tRNA ligase (945 aa).

A 'HIGH' region motif is present at residues 66–76 (PYANGDIHLGH). Residue Glu-581 participates in L-isoleucyl-5'-AMP binding. A 'KMSKS' region motif is present at residues 622–626 (KMSKS). Lys-625 serves as a coordination point for ATP. Zn(2+) is bound by residues Cys-908, Cys-911, Cys-928, and Cys-931.

It belongs to the class-I aminoacyl-tRNA synthetase family. IleS type 1 subfamily. As to quaternary structure, monomer. Zn(2+) is required as a cofactor.

It localises to the cytoplasm. The enzyme catalyses tRNA(Ile) + L-isoleucine + ATP = L-isoleucyl-tRNA(Ile) + AMP + diphosphate. In terms of biological role, catalyzes the attachment of isoleucine to tRNA(Ile). As IleRS can inadvertently accommodate and process structurally similar amino acids such as valine, to avoid such errors it has two additional distinct tRNA(Ile)-dependent editing activities. One activity is designated as 'pretransfer' editing and involves the hydrolysis of activated Val-AMP. The other activity is designated 'posttransfer' editing and involves deacylation of mischarged Val-tRNA(Ile). The chain is Isoleucine--tRNA ligase from Burkholderia orbicola (strain MC0-3).